A 467-amino-acid polypeptide reads, in one-letter code: Argininosuccinate lyase (467 aa).

It belongs to the lyase 1 family. Argininosuccinate lyase subfamily.

It is found in the cytoplasm. It carries out the reaction 2-(N(omega)-L-arginino)succinate = fumarate + L-arginine. The protein operates within amino-acid biosynthesis; L-arginine biosynthesis; L-arginine from L-ornithine and carbamoyl phosphate: step 3/3. The chain is Argininosuccinate lyase from Anaeromyxobacter dehalogenans (strain 2CP-C).